A 367-amino-acid chain; its full sequence is Uroporphyrinogen decarboxylase (367 aa).

N-acetylmethionine is present on M1. Coproporphyrinogen I contacts are provided by R37, A39, R41, R50, D86, Y164, S219, and H339. Coproporphyrinogen III is bound by residues R37, A39, and R41. The coproporphyrinogen III site is built by D86, Y164, S219, and H339.

Belongs to the uroporphyrinogen decarboxylase family. As to quaternary structure, homodimer.

It localises to the cytoplasm. The protein resides in the cytosol. It catalyses the reaction uroporphyrinogen III + 4 H(+) = coproporphyrinogen III + 4 CO2. The catalysed reaction is uroporphyrinogen I + 4 H(+) = coproporphyrinogen I + 4 CO2. It functions in the pathway porphyrin-containing compound metabolism; protoporphyrin-IX biosynthesis; coproporphyrinogen-III from 5-aminolevulinate: step 4/4. In terms of biological role, catalyzes the sequential decarboxylation of the four acetate side chains of uroporphyrinogen to form coproporphyrinogen and participates in the fifth step in the heme biosynthetic pathway. Isomer I or isomer III of uroporphyrinogen may serve as substrate, but only coproporphyrinogen III can ultimately be converted to heme. In vitro also decarboxylates pentacarboxylate porphyrinogen I. In Pongo abelii (Sumatran orangutan), this protein is Uroporphyrinogen decarboxylase.